The chain runs to 89 residues: Small ribosomal subunit protein bS18 (89 aa).

This sequence belongs to the bacterial ribosomal protein bS18 family. In terms of assembly, part of the 30S ribosomal subunit. Forms a tight heterodimer with protein bS6.

Binds as a heterodimer with protein bS6 to the central domain of the 16S rRNA, where it helps stabilize the platform of the 30S subunit. This chain is Small ribosomal subunit protein bS18, found in Parabacteroides distasonis (strain ATCC 8503 / DSM 20701 / CIP 104284 / JCM 5825 / NCTC 11152).